The following is a 470-amino-acid chain: Argininosuccinate lyase (470 aa).

This sequence belongs to the lyase 1 family. Argininosuccinate lyase subfamily.

Its subcellular location is the cytoplasm. The catalysed reaction is 2-(N(omega)-L-arginino)succinate = fumarate + L-arginine. It functions in the pathway amino-acid biosynthesis; L-arginine biosynthesis; L-arginine from L-ornithine and carbamoyl phosphate: step 3/3. In Leptospira borgpetersenii serovar Hardjo-bovis (strain JB197), this protein is Argininosuccinate lyase.